Reading from the N-terminus, the 292-residue chain is AKT-interacting protein (292 aa).

The segment covering 1-11 (MNPFWSMSTSS) has biased composition (polar residues). The tract at residues 1-63 (MNPFWSMSTS…TSPAPAAQST (63 aa)) is disordered. Over residues 14-23 (KRSEGEEKTL) the composition is skewed to basic and acidic residues. Ser-30 is modified (phosphoserine). The UBC core domain occupies 74–222 (YLEYSLLAEF…VVDSVKVCTA (149 aa)).

It belongs to the ubiquitin-conjugating enzyme family. FTS subfamily. As to quaternary structure, component of the FTS/Hook/FHIP complex (FHF complex), composed of AKTIP/FTS, FHIP1B, and one or more members of the Hook family of proteins HOOK1, HOOK2, and HOOK3. Interacts directly with HOOK1, HOOK2 and HOOK3. The FHF complex associates with the homotypic vesicular sorting complex (the HOPS complex). Also interacts with AKT1. May interact with FHIP1A.

It localises to the cytoplasm. The protein resides in the cell membrane. Component of the FTS/Hook/FHIP complex (FHF complex). The FHF complex may function to promote vesicle trafficking and/or fusion via the homotypic vesicular protein sorting complex (the HOPS complex). Regulates apoptosis by enhancing phosphorylation and activation of AKT1. Increases release of TNFSF6 via the AKT1/GSK3B/NFATC1 signaling cascade. FHF complex promotes the distribution of AP-4 complex to the perinuclear area of the cell. This chain is AKT-interacting protein, found in Homo sapiens (Human).